The chain runs to 306 residues: 2-phosphoglycerate kinase (306 aa).

One can recognise an ATP-cone domain in the interval 1–90 (MIMVQGEVSG…LWRKIRQCKE (90 aa)).

This sequence belongs to the 2-phosphoglycerate kinase family. It depends on a divalent metal cation as a cofactor.

It catalyses the reaction (2R)-2-phosphoglycerate + ATP = (2R)-2,3-bisphosphoglycerate + ADP + H(+). The protein operates within thermoadapter biosynthesis; cyclic 2,3-diphosphoglycerate biosynthesis; cyclic 2,3-diphosphoglycerate from 2-phospho-D-glycerate: step 1/2. Its function is as follows. Catalyzes the phosphorylation of 2-phosphoglycerate to 2,3-diphosphoglycerate. Involved in the biosynthesis of cyclic 2,3-bisphosphoglycerate, a thermoprotectant. This is 2-phosphoglycerate kinase from Methanothermobacter thermautotrophicus (strain ATCC 29096 / DSM 1053 / JCM 10044 / NBRC 100330 / Delta H) (Methanobacterium thermoautotrophicum).